Here is a 476-residue protein sequence, read N- to C-terminus: Protein THYLAKOID RHODANESE-LIKE, chloroplastic (476 aa).

The transit peptide at methionine 1–arginine 21 directs the protein to the chloroplast. Positions methionine 1 to alanine 29 are disordered. Positions alanine 11–arginine 21 are enriched in low complexity. The transit peptide at alanine 22 to proline 58 directs the protein to the thylakoid. The chain crosses the membrane as a helical span at residues leucine 100–glycine 120. A Rhodanese domain is found at glutamate 140–alanine 246. The next 2 membrane-spanning stretches (helical) occupy residues leucine 264 to isoleucine 284 and valine 287 to alanine 307. Residues leucine 342–proline 476 form a disordered region. Residues proline 351–alanine 389 are compositionally biased toward low complexity. A compositionally biased stretch (pro residues) spans leucine 403 to leucine 412. The span at glutamate 425 to glutamate 446 shows a compositional bias: low complexity. Over residues alanine 447–proline 476 the composition is skewed to pro residues.

In terms of assembly, component of high molecular weight thylakoid LFNRs-containing protein complexes containing LIR1, LFNR1, LFNR2, TIC62 and TROL proteins.

Its subcellular location is the plastid. The protein resides in the chloroplast thylakoid membrane. Functionally, rhodanese domain-containing protein required for anchoring ferredoxin--NADP reductase to the thylakoid membranes and sustaining efficient linear electron flow (LEF). This is Protein THYLAKOID RHODANESE-LIKE, chloroplastic from Oryza sativa subsp. indica (Rice).